We begin with the raw amino-acid sequence, 319 residues long: Pantothenate kinase (319 aa).

Position 97–104 (97–104 (GSVAVGKS)) interacts with ATP.

Belongs to the prokaryotic pantothenate kinase family.

The protein localises to the cytoplasm. The catalysed reaction is (R)-pantothenate + ATP = (R)-4'-phosphopantothenate + ADP + H(+). It participates in cofactor biosynthesis; coenzyme A biosynthesis; CoA from (R)-pantothenate: step 1/5. The sequence is that of Pantothenate kinase from Chelativorans sp. (strain BNC1).